Reading from the N-terminus, the 149-residue chain is Prefoldin subunit alpha (149 aa).

The protein belongs to the prefoldin alpha subunit family. Heterohexamer of two alpha and four beta subunits.

The protein localises to the cytoplasm. Molecular chaperone capable of stabilizing a range of proteins. Seems to fulfill an ATP-independent, HSP70-like function in archaeal de novo protein folding. The chain is Prefoldin subunit alpha from Methanoculleus marisnigri (strain ATCC 35101 / DSM 1498 / JR1).